We begin with the raw amino-acid sequence, 181 residues long: Adenylyl-sulfate kinase (181 aa).

Residue 20 to 27 (GLSGAGKS) participates in ATP binding. The Phosphoserine intermediate role is filled by Ser94.

Belongs to the APS kinase family.

It catalyses the reaction adenosine 5'-phosphosulfate + ATP = 3'-phosphoadenylyl sulfate + ADP + H(+). Its pathway is sulfur metabolism; hydrogen sulfide biosynthesis; sulfite from sulfate: step 2/3. Catalyzes the synthesis of activated sulfate. This Deinococcus geothermalis (strain DSM 11300 / CIP 105573 / AG-3a) protein is Adenylyl-sulfate kinase.